We begin with the raw amino-acid sequence, 82 residues long: MAAGSTGERPFFEIVTSIRYWVIHAVTLPSIFLAGYLFVSTGLAYDTFGTPRPDAYFQASESKAPVVSQRYEAKSQLDLRLQ.

Residues Val-22–Tyr-36 traverse the membrane as a helical segment. Residue His-24 coordinates heme.

Belongs to the PsbE/PsbF family. In terms of assembly, heterodimer of an alpha subunit and a beta subunit. PSII is composed of 1 copy each of membrane proteins PsbA, PsbB, PsbC, PsbD, PsbE, PsbF, PsbH, PsbI, PsbJ, PsbK, PsbL, PsbM, PsbT, PsbX, PsbY, Psb30/Ycf12, peripheral proteins PsbO, CyanoQ (PsbQ), PsbU, PsbV and a large number of cofactors. It forms dimeric complexes. Heme b is required as a cofactor.

Its subcellular location is the cellular thylakoid membrane. Its function is as follows. This b-type cytochrome is tightly associated with the reaction center of photosystem II (PSII). PSII is a light-driven water:plastoquinone oxidoreductase that uses light energy to abstract electrons from H(2)O, generating O(2) and a proton gradient subsequently used for ATP formation. It consists of a core antenna complex that captures photons, and an electron transfer chain that converts photonic excitation into a charge separation. The protein is Cytochrome b559 subunit alpha of Prochlorococcus marinus (strain MIT 9303).